We begin with the raw amino-acid sequence, 95 residues long: Aspartyl/glutamyl-tRNA(Asn/Gln) amidotransferase subunit C (95 aa).

This sequence belongs to the GatC family. As to quaternary structure, heterotrimer of A, B and C subunits.

It carries out the reaction L-glutamyl-tRNA(Gln) + L-glutamine + ATP + H2O = L-glutaminyl-tRNA(Gln) + L-glutamate + ADP + phosphate + H(+). It catalyses the reaction L-aspartyl-tRNA(Asn) + L-glutamine + ATP + H2O = L-asparaginyl-tRNA(Asn) + L-glutamate + ADP + phosphate + 2 H(+). Allows the formation of correctly charged Asn-tRNA(Asn) or Gln-tRNA(Gln) through the transamidation of misacylated Asp-tRNA(Asn) or Glu-tRNA(Gln) in organisms which lack either or both of asparaginyl-tRNA or glutaminyl-tRNA synthetases. The reaction takes place in the presence of glutamine and ATP through an activated phospho-Asp-tRNA(Asn) or phospho-Glu-tRNA(Gln). The protein is Aspartyl/glutamyl-tRNA(Asn/Gln) amidotransferase subunit C of Chromobacterium violaceum (strain ATCC 12472 / DSM 30191 / JCM 1249 / CCUG 213 / NBRC 12614 / NCIMB 9131 / NCTC 9757 / MK).